Reading from the N-terminus, the 861-residue chain is FO synthase (861 aa).

Radical SAM core domains are found at residues 69-319 (ITYS…LQAP) and 528-763 (VTYI…LLHP). The tract at residues 70-401 (TYSKSVFIPL…PRLLPHVRAL (332 aa)) is cofG-like. Residues cysteine 83, cysteine 87, cysteine 90, cysteine 542, cysteine 546, and cysteine 549 each contribute to the [4Fe-4S] cluster site. A cofH-like region spans residues 505-838 (DGPALDALTR…KPRTTLYGEV (334 aa)).

In the N-terminal section; belongs to the radical SAM superfamily. CofG family. It in the C-terminal section; belongs to the radical SAM superfamily. CofH family. It depends on [4Fe-4S] cluster as a cofactor.

The enzyme catalyses 5-amino-6-(D-ribitylamino)uracil + L-tyrosine + S-adenosyl-L-methionine = 5-amino-5-(4-hydroxybenzyl)-6-(D-ribitylimino)-5,6-dihydrouracil + 2-iminoacetate + 5'-deoxyadenosine + L-methionine + H(+). The catalysed reaction is 5-amino-5-(4-hydroxybenzyl)-6-(D-ribitylimino)-5,6-dihydrouracil + S-adenosyl-L-methionine = 7,8-didemethyl-8-hydroxy-5-deazariboflavin + 5'-deoxyadenosine + L-methionine + NH4(+) + H(+). It functions in the pathway cofactor biosynthesis; coenzyme F0 biosynthesis. Its function is as follows. Catalyzes the radical-mediated synthesis of 7,8-didemethyl-8-hydroxy-5-deazariboflavin (FO) from 5-amino-6-(D-ribitylamino)uracil and L-tyrosine. In Streptomyces avermitilis (strain ATCC 31267 / DSM 46492 / JCM 5070 / NBRC 14893 / NCIMB 12804 / NRRL 8165 / MA-4680), this protein is FO synthase (fbiC).